A 517-amino-acid chain; its full sequence is Bifunctional purine biosynthesis protein PurH (517 aa).

The region spanning 1-145 is the MGS-like domain; it reads MSPLALVSVS…KNHKDVSVLV (145 aa).

The protein belongs to the PurH family.

The enzyme catalyses (6R)-10-formyltetrahydrofolate + 5-amino-1-(5-phospho-beta-D-ribosyl)imidazole-4-carboxamide = 5-formamido-1-(5-phospho-D-ribosyl)imidazole-4-carboxamide + (6S)-5,6,7,8-tetrahydrofolate. It carries out the reaction IMP + H2O = 5-formamido-1-(5-phospho-D-ribosyl)imidazole-4-carboxamide. The protein operates within purine metabolism; IMP biosynthesis via de novo pathway; 5-formamido-1-(5-phospho-D-ribosyl)imidazole-4-carboxamide from 5-amino-1-(5-phospho-D-ribosyl)imidazole-4-carboxamide (10-formyl THF route): step 1/1. Its pathway is purine metabolism; IMP biosynthesis via de novo pathway; IMP from 5-formamido-1-(5-phospho-D-ribosyl)imidazole-4-carboxamide: step 1/1. This Prochlorococcus marinus (strain AS9601) protein is Bifunctional purine biosynthesis protein PurH.